Reading from the N-terminus, the 507-residue chain is Nuclear poly(A) polymerase 3 (507 aa).

ATP-binding positions include 79-81 (YGS), 91-94 (SDID), D147, K208, Y217, and 226-227 (GV). The Mg(2+) site is built by D92, D94, and D147.

This sequence belongs to the poly(A) polymerase family. As to quaternary structure, monomer. Forms a complex with cleavage and polyadenylation specificity factor (CPSF) subunits FIPS5 and CPSF30. Mg(2+) serves as cofactor. It depends on Mn(2+) as a cofactor. Expressed in leaves (mostly in petioles and tips), cotyledon, roots (tips, vascular tissue of the radicle, and throughout the root tissue excluding the elongation zone), stems, and flowers (restricted to the stigma and the pollen in mature anthers). Active in the primary and secondary root systems.

It localises to the nucleus. The catalysed reaction is RNA(n) + ATP = RNA(n)-3'-adenine ribonucleotide + diphosphate. Essential protein. Polymerase that creates the 3'-poly(A) tail of mRNA's. Also required for the endoribonucleolytic cleavage reaction at some polyadenylation sites. May acquire specificity through interaction with a cleavage and polyadenylation specificity factor (CPSF) at its C-terminus. This Arabidopsis thaliana (Mouse-ear cress) protein is Nuclear poly(A) polymerase 3.